The following is a 257-amino-acid chain: Pyridoxine 5'-phosphate synthase (257 aa).

Asn16 is a 3-amino-2-oxopropyl phosphate binding site. Residue 18–19 (DH) coordinates 1-deoxy-D-xylulose 5-phosphate. Arg27 serves as a coordination point for 3-amino-2-oxopropyl phosphate. The active-site Proton acceptor is the His52. Arg54 and His59 together coordinate 1-deoxy-D-xylulose 5-phosphate. The active-site Proton acceptor is Glu79. Thr109 lines the 1-deoxy-D-xylulose 5-phosphate pocket. The active-site Proton donor is the His200. Residues Gly201 and 222 to 223 (GH) contribute to the 3-amino-2-oxopropyl phosphate site.

Belongs to the PNP synthase family. Homooctamer; tetramer of dimers.

It is found in the cytoplasm. The enzyme catalyses 3-amino-2-oxopropyl phosphate + 1-deoxy-D-xylulose 5-phosphate = pyridoxine 5'-phosphate + phosphate + 2 H2O + H(+). It participates in cofactor biosynthesis; pyridoxine 5'-phosphate biosynthesis; pyridoxine 5'-phosphate from D-erythrose 4-phosphate: step 5/5. Catalyzes the complicated ring closure reaction between the two acyclic compounds 1-deoxy-D-xylulose-5-phosphate (DXP) and 3-amino-2-oxopropyl phosphate (1-amino-acetone-3-phosphate or AAP) to form pyridoxine 5'-phosphate (PNP) and inorganic phosphate. This chain is Pyridoxine 5'-phosphate synthase, found in Burkholderia pseudomallei (strain K96243).